Reading from the N-terminus, the 263-residue chain is Elongin-A (263 aa).

Disordered regions lie at residues 112–147 (KLEQSKQNKRIVPLEREPRAARPPKRPRPMSNYCPK) and 170–263 (SATS…PKRI). Composition is skewed to polar residues over residues 186–206 (RSSSNATNTSTKRPLTSNTYP) and 214–229 (SFTSQNFKSFNAVKTQ). The span at 230–245 (PSSSSSPSISRPTSFP) shows a compositional bias: low complexity. Over residues 253–263 (SRFSSQVPKRI) the composition is skewed to polar residues.

Belongs to the ELA1 family. In terms of assembly, heterodimer with elc1. Component of a CRL3 E3 ubiquitin ligase complex consisting of a cullin, the linker protein elc1, the substrate receptor pof4/ela1, and the RING protein rbx1. Interacts with skp1.

As part of the CRL3 E3 ubiquitin ligase complex; polyubiquitylates monoubiquitylated RNA polymerase II subunit rpb1 to trigger its proteolysis; plays a role in global genomic repair. In Schizosaccharomyces pombe (strain 972 / ATCC 24843) (Fission yeast), this protein is Elongin-A (pof4).